The chain runs to 542 residues: CTP synthase (542 aa).

Residues 1–265 (MARYIFITGG…DSEVLCAFGI (265 aa)) form an amidoligase domain region. Serine 13 is a CTP binding site. Serine 13 contributes to the UTP binding site. 14–19 (SLGKGI) contributes to the ATP binding site. Tyrosine 54 provides a ligand contact to L-glutamine. ATP is bound at residue aspartate 71. Aspartate 71 and glutamate 139 together coordinate Mg(2+). CTP contacts are provided by residues 146–148 (DIE), 186–191 (KTKPTQ), and lysine 222. Residues 186-191 (KTKPTQ) and lysine 222 contribute to the UTP site. One can recognise a Glutamine amidotransferase type-1 domain in the interval 291–541 (TIAVVGKYTG…IEATVEQSRL (251 aa)). Alanine 353 contributes to the L-glutamine binding site. The Nucleophile; for glutamine hydrolysis role is filled by cysteine 380. L-glutamine-binding positions include 381–384 (FGMQ), glutamate 404, and arginine 469. Residues histidine 514 and glutamate 516 contribute to the active site.

Belongs to the CTP synthase family. As to quaternary structure, homotetramer.

It carries out the reaction UTP + L-glutamine + ATP + H2O = CTP + L-glutamate + ADP + phosphate + 2 H(+). The catalysed reaction is L-glutamine + H2O = L-glutamate + NH4(+). It catalyses the reaction UTP + NH4(+) + ATP = CTP + ADP + phosphate + 2 H(+). Its pathway is pyrimidine metabolism; CTP biosynthesis via de novo pathway; CTP from UDP: step 2/2. Its activity is regulated as follows. Allosterically activated by GTP, when glutamine is the substrate; GTP has no effect on the reaction when ammonia is the substrate. The allosteric effector GTP functions by stabilizing the protein conformation that binds the tetrahedral intermediate(s) formed during glutamine hydrolysis. Inhibited by the product CTP, via allosteric rather than competitive inhibition. In terms of biological role, catalyzes the ATP-dependent amination of UTP to CTP with either L-glutamine or ammonia as the source of nitrogen. Regulates intracellular CTP levels through interactions with the four ribonucleotide triphosphates. This Bartonella quintana (strain Toulouse) (Rochalimaea quintana) protein is CTP synthase.